A 343-amino-acid chain; its full sequence is MMPEDYDFINACYGRPVTRTPVWLMRQAGRYLPQYRKIRERVKFLELCKTPELAAEVTLQPVDALGVDAAILFSDILIPIEAMGQNLFYRPAPVLEPPVRTAADVEALRVLQPEQDVPFVLETIRLLRRELDGRVPLIGFGGAPFTLACYMVEGAGSRHFLALKRLMYQAPETYARLMDKITDTSIVYLRAQAEAGAQALQVFDSWGGILSPADYQRYVLPYSRRLLSALGDFGIPLIHFVKGAGAMLDLVAMAGGQVVGLDWCTSLNRARDILGNGMAVQGNLDPSVLLGAQDIIEREVRRILDENAGRPGHIFNLGHGILPEVPPENAAFLVDCVHRLTQS.

Substrate-binding positions include 26 to 30, aspartate 75, tyrosine 150, serine 205, and histidine 319; that span reads RQAGR.

The protein belongs to the uroporphyrinogen decarboxylase family. In terms of assembly, homodimer.

Its subcellular location is the cytoplasm. It carries out the reaction uroporphyrinogen III + 4 H(+) = coproporphyrinogen III + 4 CO2. Its pathway is porphyrin-containing compound metabolism; protoporphyrin-IX biosynthesis; coproporphyrinogen-III from 5-aminolevulinate: step 4/4. Its function is as follows. Catalyzes the decarboxylation of four acetate groups of uroporphyrinogen-III to yield coproporphyrinogen-III. The polypeptide is Uroporphyrinogen decarboxylase (Syntrophotalea carbinolica (strain DSM 2380 / NBRC 103641 / GraBd1) (Pelobacter carbinolicus)).